We begin with the raw amino-acid sequence, 98 residues long: uncharacterized protein (98 aa).

This is an uncharacterized protein from Archaeoglobus fulgidus (strain ATCC 49558 / DSM 4304 / JCM 9628 / NBRC 100126 / VC-16).